The sequence spans 149 residues: Urease accessory protein UreE (149 aa).

This sequence belongs to the UreE family.

It is found in the cytoplasm. Its function is as follows. Involved in urease metallocenter assembly. Binds nickel. Probably functions as a nickel donor during metallocenter assembly. The protein is Urease accessory protein UreE of Prochlorococcus marinus (strain MIT 9301).